The sequence spans 194 residues: Large ribosomal subunit protein bL9 (194 aa).

Residues 169 to 194 (DDINDNARPENFFDPNAEFDGGEDNA) form a disordered region.

Belongs to the bacterial ribosomal protein bL9 family.

In terms of biological role, binds to the 23S rRNA. The chain is Large ribosomal subunit protein bL9 from Mesorhizobium japonicum (strain LMG 29417 / CECT 9101 / MAFF 303099) (Mesorhizobium loti (strain MAFF 303099)).